The following is a 315-amino-acid chain: Long form salivary protein D7L2 (315 aa).

The signal sequence occupies residues 1 to 18; it reads MIVAPVVLSIFLQLFVQA. 4 disulfides stabilise this stretch: Cys37–Cys73, Cys69–Cys128, Cys178–Cys211, and Cys252–Cys263.

The protein belongs to the PBP/GOBP family. In terms of assembly, interacts with host coagulation factor XII/F12 (inactive and activated). Interacts with host coagulation factor XI/F11 (inactive).

It is found in the secreted. Modulates blood feeding of female mosquitoes on vertebrate species by binding and sequestering different mediators involved in the host response. Binds leukotriene B4 and leukotriene D4. Exhibits anticoagulant activity targeting the intrinsic coagulation pathway; binds coagulation factors XII and XI, preventing generation of activated FXIIa and FXIa. In Anopheles gambiae (African malaria mosquito), this protein is Long form salivary protein D7L2.